The primary structure comprises 62 residues: U8-theraphotoxin-Cg1a 2 (62 aa).

Residues 1 to 21 form the signal peptide; that stretch reads MKTLVLFIIFGLAALFLLSSA. The propeptide occupies 22–29; sequence TELEETER. 3 cysteine pairs are disulfide-bonded: Cys31–Cys46, Cys38–Cys51, and Cys45–Cys58.

Belongs to the neurotoxin 10 (Hwtx-1) family. 30 (Jztx-14) subfamily. In terms of tissue distribution, expressed by the venom gland.

It is found in the secreted. Its function is as follows. Probable ion channel inhibitor. The polypeptide is U8-theraphotoxin-Cg1a 2 (Chilobrachys guangxiensis (Chinese earth tiger tarantula)).